The following is a 220-amino-acid chain: Iron-sulfur cluster repair protein YtfE (220 aa).

The protein belongs to the RIC family. YtfE subfamily. As to quaternary structure, homodimer.

It is found in the cytoplasm. Di-iron-containing protein involved in the repair of iron-sulfur clusters damaged by oxidative and nitrosative stress conditions. This Shigella boydii serotype 18 (strain CDC 3083-94 / BS512) protein is Iron-sulfur cluster repair protein YtfE.